Consider the following 76-residue polypeptide: MVFEKIKALIATQLSLDASTITLDTRFKEDLGLDSLDALELVMEVEKTFQINISDATLQNFKTVQDIVFYITKNTP.

Positions 1–75 (MVFEKIKALI…DIVFYITKNT (75 aa)) constitute a Carrier domain. O-(pantetheine 4'-phosphoryl)serine is present on Ser35.

The protein belongs to the acyl carrier protein (ACP) family. In terms of processing, 4'-phosphopantetheine is transferred from CoA to a specific serine of apo-ACP by AcpS. This modification is essential for activity because fatty acids are bound in thioester linkage to the sulfhydryl of the prosthetic group.

It is found in the cytoplasm. Its pathway is lipid metabolism; fatty acid biosynthesis. Functionally, carrier of the growing fatty acid chain in fatty acid biosynthesis. In Onion yellows phytoplasma (strain OY-M), this protein is Acyl carrier protein.